A 372-amino-acid polypeptide reads, in one-letter code: Ubl carboxyl-terminal hydrolase 18 (372 aa).

The segment at 19-45 is disordered; that stretch reads SSQSPADLEEKKEEDSNMKREQPRERP. Residues 26–45 are compositionally biased toward basic and acidic residues; sequence LEEKKEEDSNMKREQPRERP. A mediates interaction with IFNAR2 region spans residues 36-51; sequence MKREQPRERPRAWDYP. The mediates interaction with STAT2 stretch occupies residues 51–112; it reads PHGLVGLHNI…MLLLLEKMQD (62 aa). The 316-residue stretch at 55–370 folds into the USP domain; the sequence is VGLHNIGQTC…TAYLLVYMKM (316 aa). Residue C64 is the Nucleophile of the active site. The interval 303 to 312 is mediates interaction with STAT2 and necessary for the negative regulation of the type I IFN signaling pathway; that stretch reads ELFAVIAHVG. Residues 313–372 are mediates interaction with IFNAR2; sequence MADSGHYCVYIRNAVDGKWFCFNDSNICLVSWEDIQCTYGNPNYHWQETAYLLVYMKMEC. The Proton acceptor role is filled by H318.

The protein belongs to the peptidase C19 family. As to quaternary structure, interacts with STAT2; the interaction is direct. Interacts with IFNAR2; indirectly via STAT2, it negatively regulates the assembly of the ternary interferon-IFNAR1-IFNAR2 complex and inhibits type I interferon signaling. Interacts with STING1. Interacts with USP20.

The protein resides in the cytoplasm. Its subcellular location is the nucleus. It catalyses the reaction Thiol-dependent hydrolysis of ester, thioester, amide, peptide and isopeptide bonds formed by the C-terminal Gly of ubiquitin (a 76-residue protein attached to proteins as an intracellular targeting signal).. Its function is as follows. Interferon-induced ISG15-specific protease that plays a crucial role for maintaining a proper balance of ISG15-conjugated proteins in cells. Regulates protein ISGylation by efficiently cleaving ISG15 conjugates linked via isopeptide bonds. Regulates T-cell activation and T-helper 17 (Th17) cell differentiation by deubiquitinating TAK1, likely to keep TAK1-TAB complexes in steady conditions. In turn, restricts activation of NF-kappa-B, NFAT, and JNK as well as expression of IL2 in T-cells after TCR activation. Acts as a molecular adapter with USP20 to promote innate antiviral response through deubiquitinating STING1. Involved also in the negative regulation of the inflammatory response triggered by type I interferon. Upon recruitment by STAT2 to the type I interferon receptor subunit IFNAR2 interferes with the assembly of the ternary interferon-IFNAR1-IFNAR2 complex and acts as a negative regulator of the type I interferon signaling pathway. In terms of biological role, has enzymatic activity similar to isoform 1 and interferes with type I interferon signaling. Major deISGylation enzyme for nuclear proteins. The polypeptide is Ubl carboxyl-terminal hydrolase 18 (USP18) (Homo sapiens (Human)).